Reading from the N-terminus, the 180-residue chain is ATP-dependent protease subunit HslV (180 aa).

The active site involves Thr5. Residues Gly161, Cys164, and Thr167 each contribute to the Na(+) site.

This sequence belongs to the peptidase T1B family. HslV subfamily. A double ring-shaped homohexamer of HslV is capped on each side by a ring-shaped HslU homohexamer. The assembly of the HslU/HslV complex is dependent on binding of ATP.

It localises to the cytoplasm. The catalysed reaction is ATP-dependent cleavage of peptide bonds with broad specificity.. Its activity is regulated as follows. Allosterically activated by HslU binding. Its function is as follows. Protease subunit of a proteasome-like degradation complex believed to be a general protein degrading machinery. This Campylobacter lari (strain RM2100 / D67 / ATCC BAA-1060) protein is ATP-dependent protease subunit HslV.